Reading from the N-terminus, the 507-residue chain is Cobyric acid synthase (507 aa).

Residues 273–468 (RPVIAVIAYP…LHGMFEDPAV (196 aa)) enclose the GATase cobBQ-type domain. C354 serves as the catalytic Nucleophile. Residue H460 is part of the active site.

The protein belongs to the CobB/CobQ family. CobQ subfamily.

It functions in the pathway cofactor biosynthesis; adenosylcobalamin biosynthesis. Functionally, catalyzes amidations at positions B, D, E, and G on adenosylcobyrinic A,C-diamide. NH(2) groups are provided by glutamine, and one molecule of ATP is hydrogenolyzed for each amidation. This is Cobyric acid synthase from Polaromonas sp. (strain JS666 / ATCC BAA-500).